Consider the following 304-residue polypeptide: Ferredoxin fas2 (304 aa).

The 4Fe-4S ferredoxin-type domain occupies 2–29 (KVVVNERRCFGSGQCVLVAPEVFEQSND). [3Fe-4S] cluster contacts are provided by cysteine 10, cysteine 16, and cysteine 54. A transketolase-like region spans residues 66 to 304 (MRQEPTEFSY…QSARSSIQQR (239 aa)).

In the C-terminal section; belongs to the transketolase family. [3Fe-4S] cluster is required as a cofactor.

In terms of biological role, plays a role in electron transfer. The fas operon encodes genes involved in cytokinin production and in host plant fasciation (leafy gall). This is Ferredoxin fas2 (fas2) from Rhodococcoides fascians (Rhodococcus fascians).